Here is a 327-residue protein sequence, read N- to C-terminus: Methionyl-tRNA formyltransferase (327 aa).

121–124 (SLLP) lines the (6S)-5,6,7,8-tetrahydrofolate pocket.

This sequence belongs to the Fmt family.

The enzyme catalyses L-methionyl-tRNA(fMet) + (6R)-10-formyltetrahydrofolate = N-formyl-L-methionyl-tRNA(fMet) + (6S)-5,6,7,8-tetrahydrofolate + H(+). Its function is as follows. Attaches a formyl group to the free amino group of methionyl-tRNA(fMet). The formyl group appears to play a dual role in the initiator identity of N-formylmethionyl-tRNA by promoting its recognition by IF2 and preventing the misappropriation of this tRNA by the elongation apparatus. This chain is Methionyl-tRNA formyltransferase, found in Burkholderia multivorans (strain ATCC 17616 / 249).